A 69-amino-acid polypeptide reads, in one-letter code: Brevinin-1CG1 (69 aa).

The N-terminal stretch at 1–22 (MFTMKKSLLLLFFLGTINLSLC) is a signal peptide. A propeptide spans 23–43 (EQERNAEEERRDDDEMDVEVE) (removed in mature form). Cys-63 and Cys-69 are oxidised to a cystine.

In terms of tissue distribution, expressed by the skin glands.

The protein localises to the secreted. Antimicrobial peptide. Active against Gram-positive bacteria R.rhodochrous X15 and B.licheniformis X39 and against Gram-negative bacterium E.coli ATCC 25922. Has antifungal activity against a slime mold isolate. Has weak hemolytic activity against human erythrocytes. This is Brevinin-1CG1 from Amolops chunganensis (Chungan torrent frog).